Consider the following 894-residue polypeptide: Phosphoenolpyruvate carboxylase (894 aa).

Residues histidine 143 and lysine 556 contribute to the active site.

The protein belongs to the PEPCase type 1 family. Requires Mg(2+) as cofactor.

The catalysed reaction is oxaloacetate + phosphate = phosphoenolpyruvate + hydrogencarbonate. Its function is as follows. Forms oxaloacetate, a four-carbon dicarboxylic acid source for the tricarboxylic acid cycle. The chain is Phosphoenolpyruvate carboxylase from Acinetobacter baylyi (strain ATCC 33305 / BD413 / ADP1).